The sequence spans 427 residues: Glutamate-1-semialdehyde 2,1-aminomutase 1 (427 aa).

Position 267 is an N6-(pyridoxal phosphate)lysine (Lys-267).

Belongs to the class-III pyridoxal-phosphate-dependent aminotransferase family. HemL subfamily. As to quaternary structure, homodimer. Requires pyridoxal 5'-phosphate as cofactor.

It is found in the cytoplasm. It carries out the reaction (S)-4-amino-5-oxopentanoate = 5-aminolevulinate. It functions in the pathway porphyrin-containing compound metabolism; protoporphyrin-IX biosynthesis; 5-aminolevulinate from L-glutamyl-tRNA(Glu): step 2/2. The chain is Glutamate-1-semialdehyde 2,1-aminomutase 1 from Staphylococcus epidermidis (strain ATCC 35984 / DSM 28319 / BCRC 17069 / CCUG 31568 / BM 3577 / RP62A).